The chain runs to 127 residues: Aspartate 1-decarboxylase (127 aa).

Ser25 serves as the catalytic Schiff-base intermediate with substrate; via pyruvic acid. Position 25 is a pyruvic acid (Ser) (Ser25). Residue Thr57 participates in substrate binding. Tyr58 serves as the catalytic Proton donor. Position 73–75 (73–75 (GAA)) interacts with substrate.

It belongs to the PanD family. Heterooctamer of four alpha and four beta subunits. The cofactor is pyruvate. In terms of processing, is synthesized initially as an inactive proenzyme, which is activated by self-cleavage at a specific serine bond to produce a beta-subunit with a hydroxyl group at its C-terminus and an alpha-subunit with a pyruvoyl group at its N-terminus.

The protein resides in the cytoplasm. It carries out the reaction L-aspartate + H(+) = beta-alanine + CO2. Its pathway is cofactor biosynthesis; (R)-pantothenate biosynthesis; beta-alanine from L-aspartate: step 1/1. In terms of biological role, catalyzes the pyruvoyl-dependent decarboxylation of aspartate to produce beta-alanine. This chain is Aspartate 1-decarboxylase, found in Halalkalibacterium halodurans (strain ATCC BAA-125 / DSM 18197 / FERM 7344 / JCM 9153 / C-125) (Bacillus halodurans).